A 312-amino-acid polypeptide reads, in one-letter code: Phospho-N-acetylmuramoyl-pentapeptide-transferase (312 aa).

A run of 9 helical transmembrane segments spans residues 1–21, 48–68, 76–96, 115–135, 140–160, 165–185, 214–234, 238–258, and 289–309; these read MMVV…HYSK, GVAF…FGGI, EVMI…DDFL, FPLQ…LASH, GFMS…FVMV, AFNF…IVLL, VFMG…AYAL, VWLL…VVIQ, and VTLR…WLMG.

This sequence belongs to the glycosyltransferase 4 family. MraY subfamily. Mg(2+) serves as cofactor.

It localises to the cell membrane. The catalysed reaction is UDP-N-acetyl-alpha-D-muramoyl-L-alanyl-gamma-D-glutamyl-meso-2,6-diaminopimeloyl-D-alanyl-D-alanine + di-trans,octa-cis-undecaprenyl phosphate = di-trans,octa-cis-undecaprenyl diphospho-N-acetyl-alpha-D-muramoyl-L-alanyl-D-glutamyl-meso-2,6-diaminopimeloyl-D-alanyl-D-alanine + UMP. It functions in the pathway cell wall biogenesis; peptidoglycan biosynthesis. In terms of biological role, catalyzes the initial step of the lipid cycle reactions in the biosynthesis of the cell wall peptidoglycan: transfers peptidoglycan precursor phospho-MurNAc-pentapeptide from UDP-MurNAc-pentapeptide onto the lipid carrier undecaprenyl phosphate, yielding undecaprenyl-pyrophosphoryl-MurNAc-pentapeptide, known as lipid I. This chain is Phospho-N-acetylmuramoyl-pentapeptide-transferase, found in Deinococcus radiodurans (strain ATCC 13939 / DSM 20539 / JCM 16871 / CCUG 27074 / LMG 4051 / NBRC 15346 / NCIMB 9279 / VKM B-1422 / R1).